Reading from the N-terminus, the 171-residue chain is Putative rhomboid protein L523 (171 aa).

The next 4 helical transmembrane spans lie at 3–23 (YVTYIVLLILVVIFFSPLNFF), 67–87 (FAFCIIFIWILSSMLLLAEHT), 94–114 (VYTVGFSGVIFGLIVVYLMSL), and 119–139 (GLSIAGLVLSIIPQFFVSGIS). Catalysis depends on serine 100, which acts as the Nucleophile. Residue histidine 143 is part of the active site. The helical transmembrane segment at 144-164 (ICGMIAGFVYVVLFPLPKGSV) threads the bilayer.

The protein belongs to the peptidase S54 family.

The protein resides in the membrane. In terms of biological role, probable serine protease. This chain is Putative rhomboid protein L523, found in Acanthamoeba polyphaga mimivirus (APMV).